The primary structure comprises 505 residues: Glutamate--tRNA ligase (505 aa).

The short motif at 12-22 (PSPTGALHIGG) is the 'HIGH' region element. The 'KMSKS' region motif lies at 260 to 264 (KLSKR). Residue K263 participates in ATP binding.

This sequence belongs to the class-I aminoacyl-tRNA synthetase family. Glutamate--tRNA ligase type 1 subfamily. Monomer.

The protein localises to the cytoplasm. The catalysed reaction is tRNA(Glu) + L-glutamate + ATP = L-glutamyl-tRNA(Glu) + AMP + diphosphate. Catalyzes the attachment of glutamate to tRNA(Glu) in a two-step reaction: glutamate is first activated by ATP to form Glu-AMP and then transferred to the acceptor end of tRNA(Glu). This Phocaeicola vulgatus (strain ATCC 8482 / DSM 1447 / JCM 5826 / CCUG 4940 / NBRC 14291 / NCTC 11154) (Bacteroides vulgatus) protein is Glutamate--tRNA ligase.